A 1530-amino-acid polypeptide reads, in one-letter code: Neurexin-1 (1530 aa).

Positions 1-30 (MGTALVQHGGCCLLCLSLLLLGCWAELGSG) are cleaved as a signal peptide. A Laminin G-like 1 domain is found at 31–217 (LEFPGAEGQW…PPNSGGGSPC (187 aa)). The Extracellular portion of the chain corresponds to 31-1454 (LEFPGAEGQW…EVIRESSSTT (1424 aa)). Residues Asn-125 and Asn-190 are each glycosylated (N-linked (GlcNAc...) asparagine). The interval 196 to 219 (PVDGSEVKLDEEPPNSGGGSPCEA) is disordered. One can recognise an EGF-like 1 domain in the interval 213 to 255 (GGSPCEAGDEGDGGVCLNGGVCSVVDDQAVCDCSRTGFRGKDC). 2 disulfides stabilise this stretch: Cys-228–Cys-243 and Cys-245–Cys-255. 2 consecutive Laminin G-like domains span residues 299 to 496 (IATF…AFKC) and 503 to 695 (DPIT…KPSC). Residues Asp-345, Leu-362, and Met-430 each coordinate Ca(2+). 5 disulfides stabilise this stretch: Cys-460–Cys-496, Cys-666–Cys-695, Cys-703–Cys-714, Cys-708–Cys-723, and Cys-725–Cys-735. The region spanning 699-736 (TAKPCLSNPCKNNGMCRDGWNRYVCDCSGTGYLGRSCE) is the EGF-like 2 domain. Laminin G-like domains lie at 741 to 914 (VLSY…IDYC) and 928 to 1103 (DPVT…ERGC). Residues Asp-788 and Leu-805 each coordinate Ca(2+). An N-linked (GlcNAc...) asparagine glycan is attached at Asn-813. Arg-864 lines the Ca(2+) pocket. Cystine bridges form between Cys-906-Cys-914, Cys-1075-Cys-1103, Cys-1110-Cys-1121, Cys-1115-Cys-1130, and Cys-1132-Cys-1142. Residues 1106–1143 (PSTTCQEDSCSNQGVCLQQWDGFSCDCSMTSFSGPLCN) enclose the EGF-like 3 domain. The Laminin G-like 6 domain occupies 1149–1347 (YIFSKGGGQI…DANIAIVGNV (199 aa)). The Ca(2+) site is built by Asp-1199 and Val-1216. The N-linked (GlcNAc...) asparagine glycan is linked to Asn-1246. Residues Ile-1298 and Asn-1300 each coordinate Ca(2+). Ser-1408 is a glycosylation site (O-linked (Xyl...) (heparan sulfate) serine). A disordered region spans residues 1412 to 1443 (PSDDEDIDPCEPSSGGLANPTRVGGREPYPGS). Residues 1455 to 1475 (GMVVGIVAAAALCILILLYAM) form a helical membrane-spanning segment. The Cytoplasmic portion of the chain corresponds to 1476–1530 (YKYRNRDEGSYHVDESRNYISNSAQSNGAVVKEKQPSSAKSANKNKKNKDKEYYV). The segment at 1497-1523 (NSAQSNGAVVKEKQPSSAKSANKNKKN) is interaction with CASK. The tract at residues 1497–1530 (NSAQSNGAVVKEKQPSSAKSANKNKKNKDKEYYV) is disordered.

It belongs to the neurexin family. In terms of assembly, interacts (via laminin G-like domain 2 and/or laminin G-like domain 6) with NLGN1 forming a heterotetramer, where one NLGN1 dimer interacts with one NRXN1 dimer. Also interacts (via laminin G-like domain 2 and/or laminin G-like domain 6) with NLGN2, NLGN3 and NLGN4L; interactions with NLGN1, NLGN2, NLGN3 and NLGN4L are calcium-dependent. Interacts (via cytoplasmic C-terminal region) with CASK (via the PDZ, SH3 and guanylate kinase-like domains). Interacts (via cytoplasmic C-terminus) with CASKIN1 and APBA1. Interacts (via laminin G-like domain 2) with NXPH1 and NXPH3. Alpha-type isoforms (neurexin-1-alpha) interact (via laminin G-like domain 2 and/or laminin G-like domain 6) with DAG1 (via alpha-dystroglycan chain). Interacts with LRRTM1, LRRTM2, LRRTM3 and LRRTM4. Interacts with SYT13 and SYTL1. Interacts with CBLN1, CBLN2 and, less avidly, with CBLN4. Interacts with CLSTN3. Alpha-type isoforms interact with alpha-latrotoxin from spider venom. O-glycosylated; contains heparan sulfate. Heparan sulfate attachment is required for synapse development by mediating interactions with neuroligins and LRRTM2. Brain (neuronal synapse).

The protein resides in the presynaptic cell membrane. Cell surface protein involved in cell-cell-interactions, exocytosis of secretory granules and regulation of signal transmission. Function is isoform-specific. Alpha-type isoforms have a long N-terminus with six laminin G-like domains and play an important role in synaptic signal transmission. Alpha-type isoforms play a role in the regulation of calcium channel activity and Ca(2+)-triggered neurotransmitter release at synapses and at neuromuscular junctions. They play an important role in Ca(2+)-triggered exocytosis of secretory granules in pituitary gland. They may affect their functions at synapses and in endocrine cells via their interactions with proteins from the exocytotic machinery. Likewise, alpha-type isoforms play a role in regulating the activity of postsynaptic NMDA receptors, a subtype of glutamate-gated ion channels. Both alpha-type and beta-type isoforms may play a role in the formation or maintenance of synaptic junctions via their interactions (via the extracellular domains) with neuroligin family members, CBLN1 or CBLN2. In vitro, triggers the de novo formation of presynaptic structures. May be involved in specification of excitatory synapses. Alpha-type isoforms were first identified as receptors for alpha-latrotoxin from spider venom. The protein is Neurexin-1 (Nrxn1) of Rattus norvegicus (Rat).